Reading from the N-terminus, the 2244-residue chain is Multifunctional protein ura1 (2244 aa).

A GATase (Glutamine amidotransferase) region spans residues 1–437 (MSGLLPSLSS…GPRDTEFLFD (437 aa)). Residues 16 to 44 (QSEALGMPRTHGPKPSENDPKEPTCSPSP) are disordered. L-glutamine-binding residues include Ser-101, Gly-309, and Gly-311. Residues 264-449 (RILVIDVGMK…IDVVKRSADA (186 aa)) enclose the Glutamine amidotransferase type-1 domain. The Nucleophile; for GATase activity role is filled by Cys-338. L-glutamine is bound by residues Gln-342, Asn-380, Gly-382, and Tyr-383. Active-site for GATase activity residues include His-422 and Glu-424. Residues 438-477 (VFIDVVKRSADAKSLQPFKLPGGTIEENRSRHPLVDAKRV) are linker. The CPSase A stretch occupies residues 478 to 1014 (LILGSGGLSI…VEHDIHFNDK (537 aa)). Residues 478–1514 (LILGSGGLSI…TNVKCAKLMI (1037 aa)) form a CPSase (Carbamoyl phosphate synthase) region. Residues Arg-594, Arg-634, Gly-640, Gly-641, Arg-671, Met-673, Glu-678, Gly-704, Ile-705, His-706, Gln-747, and Glu-761 each coordinate ATP. Positions 598-790 (ARAMDEINEK…LAFTAAKLGL (193 aa)) constitute an ATP-grasp 1 domain. Mg(2+) is bound by residues Gln-747, Glu-761, and Asn-763. Residues Gln-747, Glu-761, and Asn-763 each coordinate Mn(2+). The tract at residues 1015–1514 (GVMVLGSGVY…TNVKCAKLMI (500 aa)) is CPSase B. At Ser-1119 the chain carries Phosphoserine. In terms of domain architecture, ATP-grasp 2 spans 1133-1324 (SRMLDDIGVD…MISMATDVIM (192 aa)). ATP is bound by residues Arg-1169, Lys-1208, Ile-1210, Glu-1215, Gly-1240, Val-1241, His-1242, Ser-1243, Gln-1283, and Glu-1295. Mg(2+) contacts are provided by Gln-1283, Glu-1295, and Asn-1297. Mn(2+) contacts are provided by Gln-1283, Glu-1295, and Asn-1297. Residues 1390 to 1552 (FRLPKKNILI…INISAFLPEF (163 aa)) form the MGS-like domain. The segment at 1515–1524 (EAICRNLDFS) is linker. The segment at 1525 to 1853 (LSTVDFQSSF…FDGHDVFFDG (329 aa)) is defective DHOase domain. The interval 1854–1935 (ELNFEHTYGR…VQLINSSPFY (82 aa)) is linker. Ser-1881 and Ser-1885 each carry phosphoserine. The interval 1936-2244 (RKHIISVHQV…CVMGATEVAN (309 aa)) is ATCase (Aspartate transcarbamylase). Positions 1988 and 1989 each coordinate carbamoyl phosphate. Lys-2016 contacts L-aspartate. Residues Arg-2037, His-2065, and Gln-2068 each coordinate carbamoyl phosphate. Positions 2098 and 2160 each coordinate L-aspartate. Residues Leu-2199 and Pro-2200 each contribute to the carbamoyl phosphate site.

The protein in the N-terminal section; belongs to the CarA family. This sequence in the 2nd section; belongs to the CarB family. In the 3rd section; belongs to the metallo-dependent hydrolases superfamily. DHOase family. CAD subfamily. It in the C-terminal section; belongs to the aspartate/ornithine carbamoyltransferase superfamily. ATCase family. Mg(2+) serves as cofactor. The cofactor is Mn(2+).

The enzyme catalyses hydrogencarbonate + L-glutamine + 2 ATP + H2O = carbamoyl phosphate + L-glutamate + 2 ADP + phosphate + 2 H(+). It carries out the reaction L-glutamine + H2O = L-glutamate + NH4(+). It catalyses the reaction hydrogencarbonate + NH4(+) + 2 ATP = carbamoyl phosphate + 2 ADP + phosphate + 2 H(+). The catalysed reaction is carbamoyl phosphate + L-aspartate = N-carbamoyl-L-aspartate + phosphate + H(+). It participates in pyrimidine metabolism; UMP biosynthesis via de novo pathway; (S)-dihydroorotate from bicarbonate: step 1/3. It functions in the pathway pyrimidine metabolism; UMP biosynthesis via de novo pathway; (S)-dihydroorotate from bicarbonate: step 2/3. Both CPSase and ATCase activities are feedback inhibited by the end product UTP. Its function is as follows. Multifunctional protein that encodes the first 2 enzymatic activities of the de novo pyrimidine pathway: carbamoylphosphate synthetase (CPSase; EC 6.3.5.5) and aspartate transcarbamylase (ATCase; EC 2.1.3.2). The CPSase-function is accomplished in 2 steps, by a glutamine-dependent amidotransferase activity (GATase) that binds and cleaves glutamine to produce ammonia, followed by an ammonium-dependent carbamoyl phosphate synthetase, which reacts with the ammonia, hydrogencarbonate and ATP to form carbamoyl phosphate. The endogenously produced carbamoyl phosphate is sequestered and channeled to the ATCase active site. ATCase then catalyzes the formation of carbamoyl-L-aspartate from L-aspartate and carbamoyl phosphate. This Schizosaccharomyces pombe (strain 972 / ATCC 24843) (Fission yeast) protein is Multifunctional protein ura1 (ura1).